A 127-amino-acid chain; its full sequence is Large ribosomal subunit protein bL20 (127 aa).

Belongs to the bacterial ribosomal protein bL20 family.

Binds directly to 23S ribosomal RNA and is necessary for the in vitro assembly process of the 50S ribosomal subunit. It is not involved in the protein synthesizing functions of that subunit. The polypeptide is Large ribosomal subunit protein bL20 (Streptomyces griseus subsp. griseus (strain JCM 4626 / CBS 651.72 / NBRC 13350 / KCC S-0626 / ISP 5235)).